We begin with the raw amino-acid sequence, 131 residues long: Global transcriptional regulator Spx 2 (131 aa).

Cys10 and Cys13 form a disulfide bridge.

Belongs to the ArsC family. Spx subfamily. In terms of assembly, interacts with the C-terminal domain of the alpha subunit of the RNAP.

The protein resides in the cytoplasm. Its function is as follows. Global transcriptional regulator that plays a key role in stress response and exerts either positive or negative regulation of genes. Acts by interacting with the C-terminal domain of the alpha subunit of the RNA polymerase (RNAP). This interaction can enhance binding of RNAP to the promoter region of target genes and stimulate their transcription, or block interaction of RNAP with activator. This is Global transcriptional regulator Spx 2 from Bacillus anthracis.